The chain runs to 653 residues: Biotin biosynthesis bifunctional protein BioWF (653 aa).

Arg-278 contributes to the substrate binding site. A pyridoxal 5'-phosphate-binding site is contributed by Gly-365 to Tyr-366. His-390 contacts substrate. Residues Ser-436, Asp-461–His-464, and Thr-492–Lys-495 contribute to the pyridoxal 5'-phosphate site. N6-(pyridoxal phosphate)lysine is present on Lys-495.

This sequence in the N-terminal section; belongs to the BioW family. It in the C-terminal section; belongs to the class-II pyridoxal-phosphate-dependent aminotransferase family. BioF subfamily. Homodimer. Requires Mg(2+) as cofactor. It depends on pyridoxal 5'-phosphate as a cofactor.

The enzyme catalyses heptanedioate + ATP + CoA = 6-carboxyhexanoyl-CoA + AMP + diphosphate. It catalyses the reaction 6-carboxyhexanoyl-[ACP] + L-alanine + H(+) = (8S)-8-amino-7-oxononanoate + holo-[ACP] + CO2. The protein operates within metabolic intermediate metabolism; pimeloyl-CoA biosynthesis; pimeloyl-CoA from pimelate: step 1/1. It participates in cofactor biosynthesis; biotin biosynthesis. Its function is as follows. Catalyzes both the decarboxylative condensation of pimeloyl-[acyl-carrier protein] and L-alanine to produce 8-amino-7-oxononanoate (AON), [acyl-carrier protein], and carbon dioxide, and the transformation of pimelate into pimeloyl-CoA with concomitant hydrolysis of ATP to AMP. The polypeptide is Biotin biosynthesis bifunctional protein BioWF (Cutibacterium acnes (strain DSM 16379 / KPA171202) (Propionibacterium acnes)).